A 474-amino-acid polypeptide reads, in one-letter code: Bifunctional protein HldE (474 aa).

The ribokinase stretch occupies residues 1–317 (MKLSMPRFDR…RRAVQREQGS (317 aa)). An ATP-binding site is contributed by 194 to 197 (NLAE). The active site involves D263. The tract at residues 343–474 (FTNGCFDILH…GIVEKIRRQP (132 aa)) is cytidylyltransferase.

The protein in the N-terminal section; belongs to the carbohydrate kinase PfkB family. In the C-terminal section; belongs to the cytidylyltransferase family. As to quaternary structure, homodimer.

The catalysed reaction is D-glycero-beta-D-manno-heptose 7-phosphate + ATP = D-glycero-beta-D-manno-heptose 1,7-bisphosphate + ADP + H(+). It carries out the reaction D-glycero-beta-D-manno-heptose 1-phosphate + ATP + H(+) = ADP-D-glycero-beta-D-manno-heptose + diphosphate. Its pathway is nucleotide-sugar biosynthesis; ADP-L-glycero-beta-D-manno-heptose biosynthesis; ADP-L-glycero-beta-D-manno-heptose from D-glycero-beta-D-manno-heptose 7-phosphate: step 1/4. It participates in nucleotide-sugar biosynthesis; ADP-L-glycero-beta-D-manno-heptose biosynthesis; ADP-L-glycero-beta-D-manno-heptose from D-glycero-beta-D-manno-heptose 7-phosphate: step 3/4. In terms of biological role, catalyzes the phosphorylation of D-glycero-D-manno-heptose 7-phosphate at the C-1 position to selectively form D-glycero-beta-D-manno-heptose-1,7-bisphosphate. Catalyzes the ADP transfer from ATP to D-glycero-beta-D-manno-heptose 1-phosphate, yielding ADP-D-glycero-beta-D-manno-heptose. In Azotobacter vinelandii (strain DJ / ATCC BAA-1303), this protein is Bifunctional protein HldE.